Reading from the N-terminus, the 61-residue chain is Photosystem II reaction center protein K (61 aa).

A propeptide spanning residues 1-24 is cleaved from the precursor; that stretch reads MLNIFNLICICFNSALFSSSFLFA. Residues 36–56 form a helical membrane-spanning segment; the sequence is IVDFMPVIPVLFFLLAFVWQA.

The protein belongs to the PsbK family. In terms of assembly, PSII is composed of 1 copy each of membrane proteins PsbA, PsbB, PsbC, PsbD, PsbE, PsbF, PsbH, PsbI, PsbJ, PsbK, PsbL, PsbM, PsbT, PsbX, PsbY, PsbZ, Psb30/Ycf12, at least 3 peripheral proteins of the oxygen-evolving complex and a large number of cofactors. It forms dimeric complexes.

Its subcellular location is the plastid. The protein localises to the chloroplast thylakoid membrane. One of the components of the core complex of photosystem II (PSII). PSII is a light-driven water:plastoquinone oxidoreductase that uses light energy to abstract electrons from H(2)O, generating O(2) and a proton gradient subsequently used for ATP formation. It consists of a core antenna complex that captures photons, and an electron transfer chain that converts photonic excitation into a charge separation. The chain is Photosystem II reaction center protein K from Gossypium barbadense (Sea Island cotton).